A 374-amino-acid polypeptide reads, in one-letter code: RNA polymerase sigma factor SigA (374 aa).

Residues 141–211 (LAEANLRLVV…TRAIADQART (71 aa)) are sigma-70 factor domain-2. Positions 165 to 168 (DLIQ) match the Interaction with polymerase core subunit RpoC motif. Positions 220–296 (ETINKLIRVQ…DQDATSPSDH (77 aa)) are sigma-70 factor domain-3. A sigma-70 factor domain-4 region spans residues 309 to 362 (VLDTLTDREENVLRLRFGLDDGRTRTLEEVGRVFGVTRERIRQIEAKALRKLRH). A DNA-binding region (H-T-H motif) is located at residues 335–354 (LEEVGRVFGVTRERIRQIEA).

It belongs to the sigma-70 factor family. RpoD/SigA subfamily. Interacts transiently with the RNA polymerase catalytic core.

The protein resides in the cytoplasm. Its function is as follows. Sigma factors are initiation factors that promote the attachment of RNA polymerase to specific initiation sites and are then released. This sigma factor is the primary sigma factor during exponential growth. The sequence is that of RNA polymerase sigma factor SigA from Listeria monocytogenes serovar 1/2a (strain ATCC BAA-679 / EGD-e).